The primary structure comprises 445 residues: Exodeoxyribonuclease 7 large subunit (445 aa).

The protein belongs to the XseA family. In terms of assembly, heterooligomer composed of large and small subunits.

It is found in the cytoplasm. It carries out the reaction Exonucleolytic cleavage in either 5'- to 3'- or 3'- to 5'-direction to yield nucleoside 5'-phosphates.. Its function is as follows. Bidirectionally degrades single-stranded DNA into large acid-insoluble oligonucleotides, which are then degraded further into small acid-soluble oligonucleotides. This is Exodeoxyribonuclease 7 large subunit from Staphylococcus aureus (strain JH1).